Reading from the N-terminus, the 374-residue chain is Queuine tRNA-ribosyltransferase (374 aa).

The active-site Proton acceptor is aspartate 89. Substrate contacts are provided by residues 89–93 (DSGGF), aspartate 143, glutamine 187, and glycine 214. Positions 245 to 251 (GVGKPED) are RNA binding. The Nucleophile role is filled by aspartate 264. An RNA binding; important for wobble base 34 recognition region spans residues 269–273 (TRNAR). Cysteine 302, cysteine 304, cysteine 307, and histidine 333 together coordinate Zn(2+).

Belongs to the queuine tRNA-ribosyltransferase family. As to quaternary structure, homodimer. Within each dimer, one monomer is responsible for RNA recognition and catalysis, while the other monomer binds to the replacement base PreQ1. It depends on Zn(2+) as a cofactor.

It carries out the reaction 7-aminomethyl-7-carbaguanine + guanosine(34) in tRNA = 7-aminomethyl-7-carbaguanosine(34) in tRNA + guanine. It participates in tRNA modification; tRNA-queuosine biosynthesis. Functionally, catalyzes the base-exchange of a guanine (G) residue with the queuine precursor 7-aminomethyl-7-deazaguanine (PreQ1) at position 34 (anticodon wobble position) in tRNAs with GU(N) anticodons (tRNA-Asp, -Asn, -His and -Tyr). Catalysis occurs through a double-displacement mechanism. The nucleophile active site attacks the C1' of nucleotide 34 to detach the guanine base from the RNA, forming a covalent enzyme-RNA intermediate. The proton acceptor active site deprotonates the incoming PreQ1, allowing a nucleophilic attack on the C1' of the ribose to form the product. After dissociation, two additional enzymatic reactions on the tRNA convert PreQ1 to queuine (Q), resulting in the hypermodified nucleoside queuosine (7-(((4,5-cis-dihydroxy-2-cyclopenten-1-yl)amino)methyl)-7-deazaguanosine). This is Queuine tRNA-ribosyltransferase from Photorhabdus laumondii subsp. laumondii (strain DSM 15139 / CIP 105565 / TT01) (Photorhabdus luminescens subsp. laumondii).